A 153-amino-acid polypeptide reads, in one-letter code: Nucleoside diphosphate kinase (153 aa).

ATP is bound by residues Lys13, Phe61, Arg89, Thr95, Arg106, and Asn116. At Thr95 the chain carries Phosphothreonine. His119 serves as the catalytic Pros-phosphohistidine intermediate.

The protein belongs to the NDK family. As to quaternary structure, homohexamer and homotetramer. Interacts with TOM40 preferentially in an unfolded, unphosphorylated form. Mg(2+) is required as a cofactor. Post-translationally, the N-terminus is blocked.

Its subcellular location is the cytoplasm. The protein localises to the mitochondrion intermembrane space. The enzyme catalyses a 2'-deoxyribonucleoside 5'-diphosphate + ATP = a 2'-deoxyribonucleoside 5'-triphosphate + ADP. The catalysed reaction is a ribonucleoside 5'-diphosphate + ATP = a ribonucleoside 5'-triphosphate + ADP. In terms of biological role, major role in the synthesis of nucleoside triphosphates other than ATP. The ATP gamma phosphate is transferred to the NDP beta phosphate via a ping-pong mechanism, using a phosphorylated active-site intermediate. Required for repair of UV radiation- and etoposide-induced DNA damage. The polypeptide is Nucleoside diphosphate kinase (YNK1) (Saccharomyces cerevisiae (strain ATCC 204508 / S288c) (Baker's yeast)).